A 275-amino-acid polypeptide reads, in one-letter code: Phage-like element PBSX protein XkdF (275 aa).

The disordered stretch occupies residues 247–275 (KARGASKQTADDTGGNTEQVKKSIWSGLL).

This sequence to B.subtilis YqbD.

The polypeptide is Phage-like element PBSX protein XkdF (xkdF) (Bacillus subtilis (strain 168)).